The primary structure comprises 302 residues: Bifunctional protein FolD (302 aa).

Residues 165 to 167 (GRS), Ser190, and Ile231 contribute to the NADP(+) site.

It belongs to the tetrahydrofolate dehydrogenase/cyclohydrolase family. As to quaternary structure, homodimer.

It catalyses the reaction (6R)-5,10-methylene-5,6,7,8-tetrahydrofolate + NADP(+) = (6R)-5,10-methenyltetrahydrofolate + NADPH. The catalysed reaction is (6R)-5,10-methenyltetrahydrofolate + H2O = (6R)-10-formyltetrahydrofolate + H(+). It participates in one-carbon metabolism; tetrahydrofolate interconversion. Functionally, catalyzes the oxidation of 5,10-methylenetetrahydrofolate to 5,10-methenyltetrahydrofolate and then the hydrolysis of 5,10-methenyltetrahydrofolate to 10-formyltetrahydrofolate. The sequence is that of Bifunctional protein FolD from Prochlorococcus marinus (strain MIT 9303).